The primary structure comprises 461 residues: UDP-glucosyltransferase 1 (461 aa).

It belongs to the UDP-glycosyltransferase family.

It participates in secondary metabolite biosynthesis. In terms of biological role, UDP-glucosyltransferase; part of the pathway that mediates the biosynthesis of tenellin-type 2-pyridones, iron-chelating compounds involved in iron stress tolerance, competition with the natural competitor fungus Metarhizium robertsii and insect hosts infection. Targets the N-OH hydroxyl residue of 15-hydroxytellenin (15-HT) to produce pyridovericin-N-O-(beta-D-glucopyranoside) which is further methylated by the methyltransferase MT1 to yield pyridovericin-N-O-(4-O-methyl-beta-D-glucopyranoside) (PMGP). The pathway begins with the assembly of the polyketide-amino acid backbone by the hybrid PKS-NRPS tenS with the help of the enoyl reductase tenC. These enzymes catalyze the synthesis of the pyrrolidine-2-dione intermediates pretellinin A, 11-hydropretellenin A, 12-hydropretellenin A, 13-hydropretellenin A, 14-hydropretellenin A, 12-oxopretellenin A and prototellinin D. The cytochrome P450 monooxygenase tenA then catalyzes an oxidative ring expansion of pretenellin A and 14-hydropretellenin A to form the 2-pyridone core, leading to pretenellin B and pyridovericin, respectively. The cytochrome P450 monooxygenase tenB is then required for the selective N-hydroxylation of the 2-pyridone nitrogen of yield tellinin and 15-hydroxytellenin (15-HT), respectively. The UDP-glucosyltransferase GT1 and the methyltransferase MT1, located outside the tenS gene cluster, contribute to the stepwise glycosylation and methylation of 15-HT to obtain the glycoside pyridovericin-N-O-(4-O-methyl-beta-D-glucopyranoside) (PMGP). Additional related compounds such as 1-O-methyl-15-HT, (8Z)-1-O-methyl-15-HT, and O-methyltenellin A are also produced but the enzymes involved in their biosynthesis have still to be determined. In Beauveria bassiana (strain ARSEF 2860) (White muscardine disease fungus), this protein is UDP-glucosyltransferase 1.